A 457-amino-acid polypeptide reads, in one-letter code: Dihydrolipoyllysine-residue acetyltransferase component of pyruvate dehydrogenase complex, mitochondrial (457 aa).

The transit peptide at 1–30 directs the protein to the mitochondrion; it reads MLSAALRRRVLAPTHSALRTGFAAHVVRHY. Residues 36–112 enclose the Lipoyl-binding domain; that stretch reads HQVIKMPALS…PVGSPIAVLV (77 aa). Position 77 is an N6-lipoyllysine (Lys77). The disordered stretch occupies residues 129 to 168; it reads AGGDAAKPAAPKKEEKSESKSESASAPEPTPEPQQYQSQG. A compositionally biased stretch (basic and acidic residues) spans 139–149; it reads PKKEEKSESKS. Residue Lys148 is modified to N6-crotonyllysine. One can recognise a Peripheral subunit-binding (PSBD) domain in the interval 179–216; it reads NISASAKRLAREKGISIDGLKGTGKNGQITEEDVKKAI. Residues His430 and Asp434 contribute to the active site.

The protein belongs to the 2-oxoacid dehydrogenase family. In terms of assembly, eukaryotic pyruvate dehydrogenase (PDH) complexes are organized as a core consisting of the oligomeric dihydrolipoamide acetyl-transferase (E2), around which are arranged multiple copies of pyruvate dehydrogenase (E1), dihydrolipoamide dehydrogenase (E3) and protein X (E3BP) bound by non-covalent bonds. Interacts with SIR5; the interaction is direct. It depends on (R)-lipoate as a cofactor. In terms of processing, decrotonylated at 'Lys-148' by SIR5, which inhibits the activity of the pyruvate dehydrogenase complex (PDC).

The protein resides in the mitochondrion matrix. The catalysed reaction is N(6)-[(R)-dihydrolipoyl]-L-lysyl-[protein] + acetyl-CoA = N(6)-[(R)-S(8)-acetyldihydrolipoyl]-L-lysyl-[protein] + CoA. The pyruvate dehydrogenase complex catalyzes the overall conversion of pyruvate to acetyl-CoA and CO(2). High pyruvate dehydrogenase complex activity is required for sufficient energy production during germination of conidia. The chain is Dihydrolipoyllysine-residue acetyltransferase component of pyruvate dehydrogenase complex, mitochondrial from Fusarium oxysporum f. sp. lycopersici (strain 4287 / CBS 123668 / FGSC 9935 / NRRL 34936) (Fusarium vascular wilt of tomato).